The sequence spans 466 residues: Xanthine permease XanQ (466 aa).

Topologically, residues 1-44 are cytoplasmic; that stretch reads MSDINHAGSDLIFELEDRPPFHQALVGAITHLLAIFVPMVTPAL. Residues 45-65 traverse the membrane as a helical segment; sequence IVGAALQLSAETTAYLVSMAM. The Periplasmic segment spans residues 66–74; sequence IASGIGTWL. A helical membrane pass occupies residues 75-95; the sequence is QVNRYGIVGSGLLSIQSVNFS. Residues 96-99 lie on the Cytoplasmic side of the membrane; sequence FVTV. Residues 100–120 form a helical membrane-spanning segment; the sequence is MIALGSSMKSDGFHEELIMSS. At 121-139 the chain is on the periplasmic side; it reads LLGVSFVGAFLVVGSSFIL. Residues 140-160 form a helical membrane-spanning segment; that stretch reads PYLRRVITPTVSGIVVLMIGL. The Cytoplasmic portion of the chain corresponds to 161 to 170; sequence SLIKVGIIDF. Residues 171–191 traverse the membrane as a helical segment; it reads GGGFAAKSSGTFGNYEHLGVG. At 192–199 the chain is on the periplasmic side; that stretch reads LLVLIVVI. The chain crosses the membrane as a helical span at residues 200-220; the sequence is GFNCCRSPLLRMGGIAIGLCV. The Cytoplasmic portion of the chain corresponds to 221-229; sequence GYIASLCLG. A helical membrane pass occupies residues 230–250; sequence MVDFSSMRNLPLITIPHPFKY. At 251–277 the chain is on the periplasmic side; sequence GFSFSFHQFLVVGTIYLLSVLEAVGDI. The helical transmembrane segment at 278–298 threads the bilayer; it reads TATAMVSRRPIQGEEYQSRLK. The Cytoplasmic segment spans residues 299 to 317; sequence GGVLADGLVSVIASAVGSL. A helical transmembrane segment spans residues 318–338; sequence PLTTFAQNNGVIQMTGVASRY. Residues 339 to 361 are Periplasmic-facing; it reads VGRTIAVMLVILGLFPMIGGFFT. A helical membrane pass occupies residues 362–382; the sequence is TIPSAVLGGAMTLMFSMIAIA. Position 383 (glycine 383) is a topological domain, cytoplasmic. Residues 384-403 form a helical membrane-spanning segment; that stretch reads IRIIITNGLKRRETLIVATS. Over 404-444 the chain is Periplasmic; sequence LGLGLGVSYDPEIFKILPASIYVLVENPICAGGLTAILLNI. Residues 445 to 465 form a helical membrane-spanning segment; it reads ILPGGYRQENVLPGITSAEEM. Aspartate 466 is a topological domain (cytoplasmic).

Belongs to the nucleobase:cation symporter-2 (NCS2) (TC 2.A.40) family.

It localises to the cell inner membrane. The enzyme catalyses xanthine(in) + H(+)(in) = xanthine(out) + H(+)(out). Functionally, specific, proton motive force-dependent high-affinity transporter for xanthine. In Escherichia coli O157:H7, this protein is Xanthine permease XanQ (xanQ).